The chain runs to 370 residues: Queuine tRNA-ribosyltransferase (370 aa).

Asp93 serves as the catalytic Proton acceptor. Residues 93–97 (DSGGF), Asp147, Gln189, and Gly216 contribute to the substrate site. Residues 247–253 (GVGSPDC) form an RNA binding region. The active-site Nucleophile is the Asp266. An RNA binding; important for wobble base 34 recognition region spans residues 271–275 (TRIAR). Zn(2+) is bound by residues Cys304, Cys306, Cys309, and His335.

It belongs to the queuine tRNA-ribosyltransferase family. Homodimer. Within each dimer, one monomer is responsible for RNA recognition and catalysis, while the other monomer binds to the replacement base PreQ1. It depends on Zn(2+) as a cofactor.

It carries out the reaction 7-aminomethyl-7-carbaguanine + guanosine(34) in tRNA = 7-aminomethyl-7-carbaguanosine(34) in tRNA + guanine. The protein operates within tRNA modification; tRNA-queuosine biosynthesis. Its function is as follows. Catalyzes the base-exchange of a guanine (G) residue with the queuine precursor 7-aminomethyl-7-deazaguanine (PreQ1) at position 34 (anticodon wobble position) in tRNAs with GU(N) anticodons (tRNA-Asp, -Asn, -His and -Tyr). Catalysis occurs through a double-displacement mechanism. The nucleophile active site attacks the C1' of nucleotide 34 to detach the guanine base from the RNA, forming a covalent enzyme-RNA intermediate. The proton acceptor active site deprotonates the incoming PreQ1, allowing a nucleophilic attack on the C1' of the ribose to form the product. After dissociation, two additional enzymatic reactions on the tRNA convert PreQ1 to queuine (Q), resulting in the hypermodified nucleoside queuosine (7-(((4,5-cis-dihydroxy-2-cyclopenten-1-yl)amino)methyl)-7-deazaguanosine). The sequence is that of Queuine tRNA-ribosyltransferase from Pelotomaculum thermopropionicum (strain DSM 13744 / JCM 10971 / SI).